A 201-amino-acid polypeptide reads, in one-letter code: MLPVAASRCLWGPRLGLRGAALRLARQQMPSVCAARQLRSSSHRRSEALAGAPLDNAPKEYPPKIQQLVQDIASLTLLEISDLNELLKKTLKIQDVGLMPMGGMVPGPVSAAAPASEAAEEEDVPKQKERTHFTVRLTEAKPVDKVKLIKEIKNYVQGINLVQAKKLVESLPQEIKANVAKAEAEKIKAALEAVGGTVVLE.

A mitochondrion-targeting transit peptide spans 1-38; that stretch reads MLPVAASRCLWGPRLGLRGAALRLARQQMPSVCAARQL. 2 disordered regions span residues 37–60 and 109–130; these read QLRSSSHRRSEALAGAPLDNAPKE and VSAAAPASEAAEEEDVPKQKER. N6-acetyllysine occurs at positions 128, 141, 145, and 147. Lysine 153 bears the N6-acetyllysine; alternate mark. Residue lysine 153 is modified to N6-succinyllysine; alternate. Lysine 153 participates in a covalent cross-link: Glycyl lysine isopeptide (Lys-Gly) (interchain with G-Cter in ubiquitin). Lysine 165 is modified (N6-succinyllysine). Lysine 166 and lysine 176 each carry N6-acetyllysine. Lysine 181 bears the N6-acetyllysine; alternate mark. Position 181 is an N6-succinyllysine; alternate (lysine 181). Position 188 is an N6-acetyllysine (lysine 188).

The protein belongs to the bacterial ribosomal protein bL12 family. As to quaternary structure, component of the mitochondrial ribosome large subunit (39S) which comprises a 16S rRNA and about 50 distinct proteins. Interacts with NOA1. Post-translationally, two mature forms are produced by differential two-step proteolytic cleavage. Cleaved by the mitochondrial processing protease to produce the long mature form and subsequently by the mitochondrial intermediate protease to produce the short mature form. In terms of processing, in the presence of CUL3, undergoes 'Lys-63'-linked ubiquitination at Lys-153 which results in proteasomal degradation.

The protein localises to the mitochondrion matrix. Its function is as follows. As a component of the mitochondrial large ribosomal subunit, plays a role in mitochondrial translation. When present in mitochondria as a free protein not associated with the ribosome, associates with mitochondrial RNA polymerase POLRMT to activate transcription. Required for POLRMT stability. This chain is Large ribosomal subunit protein bL12m (Mrpl12), found in Mus musculus (Mouse).